Consider the following 154-residue polypeptide: D-ribose pyranase 2 (154 aa).

H20 functions as the Proton donor in the catalytic mechanism. Residues D28, H98, and 121–123 each bind substrate; that span reads WGN.

It belongs to the RbsD / FucU family. RbsD subfamily. Homodecamer.

It is found in the cytoplasm. It catalyses the reaction beta-D-ribopyranose = beta-D-ribofuranose. The protein operates within carbohydrate metabolism; D-ribose degradation; D-ribose 5-phosphate from beta-D-ribopyranose: step 1/2. Functionally, catalyzes the interconversion of beta-pyran and beta-furan forms of D-ribose. This chain is D-ribose pyranase 2, found in Rubrobacter xylanophilus (strain DSM 9941 / JCM 11954 / NBRC 16129 / PRD-1).